Reading from the N-terminus, the 554-residue chain is Putative F-box/LRR-repeat protein 8 (554 aa).

The F-box domain occupies 71-117 (YDYISNLPDECLSLIFQSLTCADLKRCSLVCRRWLTIEGQCRHRLSL). LRR repeat units lie at residues 119 to 144 (AQSD…VLRS), 148 to 173 (SLGI…KLRG), 174 to 199 (CPEI…SFGS), 205 to 224 (KGMN…SVKR), 250 to 275 (KELH…KIFR), 301 to 325 (RIQM…HLVK), 326 to 351 (TPDC…HIDG), 354 to 379 (TNRI…VLIG), 383 to 404 (TKLS…ALCG), 405 to 428 (SDTV…KLCI), 430 to 455 (NCPI…KVKK), and 456 to 480 (CRGV…NLDA).

The protein is Putative F-box/LRR-repeat protein 8 (FBL8) of Arabidopsis thaliana (Mouse-ear cress).